The following is a 228-amino-acid chain: Growth arrest-specific protein 1 homolog (228 aa).

The first 17 residues, 1-17 (MRRVILPLVMTVTLCLA), serve as a signal peptide directing secretion. Residues Asn143 and Asn156 are each glycosylated (N-linked (GlcNAc...) asparagine). Asp205 is lipidated: GPI-anchor amidated aspartate. Residues 206–228 (SSVGHGFNILSAISVYLLTVLVF) constitute a propeptide, removed in mature form.

As to expression, pharynx muscle cells from its early formation, in the two-fold embryo, until the adult stage.

It localises to the cell membrane. Its function is as follows. Role in pharynx function or development. In Caenorhabditis elegans, this protein is Growth arrest-specific protein 1 homolog (phg-1).